The sequence spans 607 residues: UPF0329 protein ECU06_1610 (607 aa).

Disordered stretches follow at residues 312–410 and 531–570; these read VHEV…RSKG and TSSE…PPGV. Basic and acidic residues predominate over residues 313-347; the sequence is HEVKERESEEKRREEESLRNAEELLRMEEREKGEG. Over residues 353–364 the composition is skewed to basic residues; it reads KGKKKRGKKGAG. A compositionally biased stretch (basic and acidic residues) spans 365-374; it reads KAKEESKEED. Residues 375–393 are compositionally biased toward acidic residues; the sequence is RGEEEEESVEAEVPVEEMA. The segment covering 531 to 543 has biased composition (polar residues); that stretch reads TSSEKTGKGSSPS. Residues 549–558 show a composition bias toward acidic residues; it reads DVDEIEEDGS.

Belongs to the UPF0329 family.

The chain is UPF0329 protein ECU06_1610 from Encephalitozoon cuniculi (strain GB-M1) (Microsporidian parasite).